Consider the following 347-residue polypeptide: GMP reductase (347 aa).

108 to 131 lines the NADP(+) pocket; the sequence is ADFQKTKDIMALTDDLIFICVDIA. K(+) is bound by residues glycine 181 and glycine 183. The active-site Thioimidate intermediate is the cysteine 186. 216 to 239 contacts NADP(+); that stretch reads IIGDGGCSCAGDVSKAFGGGADFV.

Belongs to the IMPDH/GMPR family. GuaC type 1 subfamily. In terms of assembly, homotetramer.

It carries out the reaction IMP + NH4(+) + NADP(+) = GMP + NADPH + 2 H(+). Catalyzes the irreversible NADPH-dependent deamination of GMP to IMP. It functions in the conversion of nucleobase, nucleoside and nucleotide derivatives of G to A nucleotides, and in maintaining the intracellular balance of A and G nucleotides. The sequence is that of GMP reductase from Aliivibrio salmonicida (strain LFI1238) (Vibrio salmonicida (strain LFI1238)).